The primary structure comprises 689 residues: Pentatricopeptide repeat-containing protein At1g71460, chloroplastic (689 aa).

The transit peptide at 1 to 49 directs the protein to the chloroplast; it reads MEVVSSLGIRDLPASLSVTTSLNHRPHRSDKDGAPAKSPIRPSRTRRPS. The segment at 16 to 68 is disordered; the sequence is LSVTTSLNHRPHRSDKDGAPAKSPIRPSRTRRPSTSPAKKPKPFRERDAFPSS. The span at 38 to 52 shows a compositional bias: low complexity; sequence SPIRPSRTRRPSTSP. PPR repeat units lie at residues 75–109, 110–144, 145–175, 176–212, 213–247, 248–282, 283–309, 315–350, 351–381, 382–416, 417–451, 452–482, 483–517, 518–552, 553–583, 584–618, 619–649, and 655–689; these read NPYI…GIPV, NATT…GLES, NEFL…STSS, NVYS…GVDL, NVYS…GLFN, SVFL…DIVV, WGAM…MISE, NSVI…NYVE, QPFV…SKQR, NAIS…GFRP, DVVT…LFLP, NVSL…LEQR, NVKA…KHRP, DSVT…EFES, IPFV…VAVK, GSLT…GFTP, NTFT…MLRM, and SEEH…SLQT.

This sequence belongs to the PPR family. PCMP-A subfamily.

It localises to the plastid. It is found in the chloroplast. The protein is Pentatricopeptide repeat-containing protein At1g71460, chloroplastic (PCMP-A3) of Arabidopsis thaliana (Mouse-ear cress).